Consider the following 494-residue polypeptide: 2,3-bisphosphoglycerate-independent phosphoglycerate mutase (494 aa).

Positions 12 and 62 each coordinate Mn(2+). S62 serves as the catalytic Phosphoserine intermediate. Substrate-binding positions include H121, R150–D151, R181, R187, R252–R255, and K317. Residues D384, H388, D425, H426, and H443 each coordinate Mn(2+).

The protein belongs to the BPG-independent phosphoglycerate mutase family. In terms of assembly, monomer. Mn(2+) serves as cofactor.

The catalysed reaction is (2R)-2-phosphoglycerate = (2R)-3-phosphoglycerate. The protein operates within carbohydrate degradation; glycolysis; pyruvate from D-glyceraldehyde 3-phosphate: step 3/5. In terms of biological role, catalyzes the interconversion of 2-phosphoglycerate and 3-phosphoglycerate. This is 2,3-bisphosphoglycerate-independent phosphoglycerate mutase from Anaplasma marginale (strain St. Maries).